The primary structure comprises 377 residues: Queuine tRNA-ribosyltransferase (377 aa).

Aspartate 89 functions as the Proton acceptor in the catalytic mechanism. Substrate is bound by residues 89–93, aspartate 143, glutamine 187, and glycine 214; that span reads DSGGF. The interval 245-251 is RNA binding; it reads GVGKPED. Aspartate 264 acts as the Nucleophile in catalysis. The segment at 269 to 273 is RNA binding; important for wobble base 34 recognition; the sequence is TRNAR. 4 residues coordinate Zn(2+): cysteine 302, cysteine 304, cysteine 307, and histidine 333.

This sequence belongs to the queuine tRNA-ribosyltransferase family. As to quaternary structure, homodimer. Within each dimer, one monomer is responsible for RNA recognition and catalysis, while the other monomer binds to the replacement base PreQ1. It depends on Zn(2+) as a cofactor.

It catalyses the reaction 7-aminomethyl-7-carbaguanine + guanosine(34) in tRNA = 7-aminomethyl-7-carbaguanosine(34) in tRNA + guanine. It functions in the pathway tRNA modification; tRNA-queuosine biosynthesis. Its function is as follows. Catalyzes the base-exchange of a guanine (G) residue with the queuine precursor 7-aminomethyl-7-deazaguanine (PreQ1) at position 34 (anticodon wobble position) in tRNAs with GU(N) anticodons (tRNA-Asp, -Asn, -His and -Tyr). Catalysis occurs through a double-displacement mechanism. The nucleophile active site attacks the C1' of nucleotide 34 to detach the guanine base from the RNA, forming a covalent enzyme-RNA intermediate. The proton acceptor active site deprotonates the incoming PreQ1, allowing a nucleophilic attack on the C1' of the ribose to form the product. After dissociation, two additional enzymatic reactions on the tRNA convert PreQ1 to queuine (Q), resulting in the hypermodified nucleoside queuosine (7-(((4,5-cis-dihydroxy-2-cyclopenten-1-yl)amino)methyl)-7-deazaguanosine). This Shewanella sediminis (strain HAW-EB3) protein is Queuine tRNA-ribosyltransferase.